The sequence spans 66 residues: Alpha-conotoxin Vc1a (66 aa).

Residues 1–25 (MGMRMMFTVFLLVVLATTVVSSTSG) form the signal peptide. Positions 26-47 (RREFRGRNAAAKASDLVSLTDK) are excised as a propeptide. Intrachain disulfides connect Cys-51–Cys-57 and Cys-52–Cys-65. A ser-Xaa-Pro motif, crucial for potent interaction with nAChR region spans residues 53-55 (SDP). Key region for inhibition of alpha-9-alpha-10/CHRNA9-CHRNA10 nAChR regions lie at residues 54–56 (DPR) and 60–64 (DHPEI). Pro-55 carries the post-translational modification 4-hydroxyproline. Glu-63 carries the 4-carboxyglutamate modification. A Cysteine amide modification is found at Cys-65.

Belongs to the conotoxin A superfamily. Post-translationally, vc1.1 is described as having no post-translational modifications (except C-terminal amidation), whereas Vc1a contains a hydroxyproline at Pro-55 and a 4-carboxyglutamate at Glu-63 (and a C-terminal amidation). In terms of processing, hydroxylation of Pro-55 is not important for inhibition of alpha-9-alpha-10/CHRNA9-CHRNA10 nAChRs, since [P6O]Vc1.1 (Pro-55 hydroxylated) shows similar inhibition than native toxin (IC(50)=99.1 nM). In contrast, hydroxylation of Pro-55 seems to impair inhibition of HVA calcium channel currents, since [P6O]Vc1.1 has no effect on HVA calcium channel currents. In vivo, hydroxylation of Pro-55 seems to induce the loss of analgesic effects in rat models of neuropathic pain, since [P6O]Vc1.1 has no effect on mechanical allodynia. Gamma-carboxylation of Glu-63 is not important for inhibition of alpha-9-alpha-10/CHRNA9-CHRNA10 nAChRs, since [E14gamma]Vc1.1 (carboxyglutamate at Glu-63) shows similar inhibition than native toxin (IC(50)=65.3 nM). In contrast, gamma-carboxylation of Glu-63 seems to impair inhibition of HVA calcium channel currents, since [E14gamma]Vc1.1 has no effect on HVA calcium channel currents. Post-translationally, non-native isomers 'ribbon' (with disulfide connectivity C1-C4; C2-C3) and 'beads' (with disulfide connectivity C1-C2; C3-C4) of Vc1.1 also inhibit HVA calcium channel currents in rat DRG neurons (20-30% inhibition at 1 uM toxin). It has been shown that both reduced and alkylated Vc1.1 have no effect on HVA calcium channel currents. The observed activity can be attributed to specific isomers. In terms of processing, [C3S]Vc1.1(1-8) mutant is C-terminally amidated. Expressed by the venom duct.

It localises to the secreted. Its function is as follows. Alpha-conotoxins act on postsynaptic membranes, they bind to the nicotinic acetylcholine receptors (nAChR) and thus inhibit them. This toxin (native toxin Vc1a; hydroxylated and gamma-carboxylated) blocks alpha-9-alpha-10/CHRNA9-CHRNA10 nAChRs (IC(50)=62.9 nM). In contrast to the non-post-translationally modified analog Vc1.1, Vc1a does not inhibit high voltage-activated (HVA) calcium channel currents. In vivo, in contrast to Vc1.1, Vc1a does not show analgesic effects in rat models of neuropathic pain. The synthetic peptide Vc1.1 (a non-hydroxylated and non-gamma-carboxylated analog of Vc1a) has two types of targets. It blocks alpha-9-alpha-10/CHRNA9-CHRNA10 nAChRs (on rat receptors, IC(50)=19-109 nM) (with preference for rat over human receptors) and inhibits high voltage-activated (HVA) calcium channel (Cav2.2, Cav2.3) currents by acting on GABA(B) receptors (GABBR1 and GABBR2) (IC(50)=1.7 nM). It also shows moderate inhibition on alpha-6/alpha-3-beta-2-beta-3 (CHRNA6/CHRNA3-CHRNB2-CHRNB3) (IC(50)=140 nM) and alpha-6/alpha-3-beta-4 (CHRNA6/CHRNA3-CHRNB4) (IC(50)=980 nM). On alpha-9-alpha-10/CHRNA9-CHRNA10 nAChR, it most likely interacts with the alpha-10(+)/alpha-9(-)interface of the receptor. In vivo, it acts as a powerful analgesic in rat models of neuropathic pain. The chain is Alpha-conotoxin Vc1a from Conus victoriae (Queen Victoria cone).